The chain runs to 116 residues: Large ribosomal subunit protein uL18 (116 aa).

The protein belongs to the universal ribosomal protein uL18 family. Part of the 50S ribosomal subunit; part of the 5S rRNA/L5/L18/L25 subcomplex. Contacts the 5S and 23S rRNAs.

This is one of the proteins that bind and probably mediate the attachment of the 5S RNA into the large ribosomal subunit, where it forms part of the central protuberance. This chain is Large ribosomal subunit protein uL18, found in Shewanella piezotolerans (strain WP3 / JCM 13877).